We begin with the raw amino-acid sequence, 1964 residues long: Neurogenic locus notch homolog protein 4 (1964 aa).

Positions Met1–Thr20 are cleaved as a signal peptide. EGF-like domains lie at Arg21–Gln60, Phe61–Gln112, Leu115–Gln152, and Leu153–Glu189. At Arg21–Trp1443 the chain is on the extracellular side. Cystine bridges form between Cys25–Cys38, Cys32–Cys48, Cys50–Cys59, Cys65–Cys77, Cys71–Cys100, Cys102–Cys111, Cys119–Cys130, Cys124–Cys140, Cys142–Cys151, Cys157–Cys168, Cys162–Cys177, Cys179–Cys188, Cys195–Cys208, Cys202–Cys217, Cys219–Cys228, Cys235–Cys246, Cys240–Cys259, Cys261–Cys270, Cys277–Cys288, Cys282–Cys297, Cys299–Cys308, Cys315–Cys329, Cys323–Cys338, Cys340–Cys349, Cys356–Cys367, Cys361–Cys376, Cys378–Cys387, Cys393–Cys404, Cys398–Cys415, Cys417–Cys426, Cys433–Cys449, Cys443–Cys458, Cys460–Cys469, Cys476–Cys487, Cys481–Cys496, Cys498–Cys507, Cys514–Cys525, Cys519–Cys534, Cys536–Cys545, Cys552–Cys563, Cys557–Cys572, Cys574–Cys583, Cys590–Cys601, Cys595–Cys610, Cys612–Cys621, Cys626–Cys637, Cys631–Cys646, Cys648–Cys655, Cys662–Cys669, Cys664–Cys674, Cys676–Cys685, Cys692–Cys703, Cys697–Cys712, Cys714–Cys723, Cys730–Cys741, Cys735–Cys750, Cys752–Cys761, Cys768–Cys779, Cys773–Cys788, Cys790–Cys799, Cys807–Cys818, Cys812–Cys827, Cys829–Cys838, Cys845–Cys856, Cys850–Cys865, Cys867–Cys876, Cys882–Cys903, Cys897–Cys912, Cys914–Cys923, Cys930–Cys941, Cys935–Cys950, Cys952–Cys961, Cys968–Cys979, Cys973–Cys988, Cys990–Cys999, Cys1006–Cys1019, Cys1011–Cys1028, Cys1030–Cys1039, Cys1046–Cys1057, Cys1051–Cys1069, Cys1071–Cys1080, Cys1087–Cys1098, Cys1092–Cys1110, Cys1112–Cys1121, Cys1130–Cys1142, Cys1136–Cys1155, Cys1157–Cys1166, Cys1174–Cys1187, Cys1183–Cys1199, Cys1210–Cys1234, Cys1216–Cys1229, Cys1225–Cys1241, Cys1247–Cys1273, Cys1255–Cys1268, and Cys1264–Cys1280. Residues Asp191 to Lys229 form the EGF-like 5; calcium-binding domain. The region spanning Arg231–Glu271 is the EGF-like 6 domain. The region spanning Asn273 to Ser309 is the EGF-like 7; calcium-binding domain. The EGF-like 8; calcium-binding domain occupies Asp311–Glu350. In terms of domain architecture, EGF-like 9; calcium-binding spans Asn352–His388. Residues Leu389–His427 form the EGF-like 10 domain. An EGF-like 11; calcium-binding domain is found at Asp429–Glu470. The EGF-like 12; calcium-binding domain maps to Asp472–Glu508. The 37-residue stretch at Glu510–Glu546 folds into the EGF-like 13; calcium-binding domain. The 37-residue stretch at Asp548–Glu584 folds into the EGF-like 14; calcium-binding domain. Residues Glu586–Glu622 enclose the EGF-like 15; calcium-binding domain. 14 consecutive EGF-like domains span residues Val623–Val656, Ala658–Glu686, Glu688–Ser724, Glu726–Gln762, Ala764–Glu800, Thr803–Gln839, Leu841–Asp877, Phe878–Gln924, Asn926–Ser962, Val964–Glu1000, Asp1002–Glu1040, Glu1042–Ser1081, Lys1083–Leu1122, and Ala1126–Gln1167. N-linked (GlcNAc...) asparagine glycosylation is present at Asn711. Asn960 carries N-linked (GlcNAc...) asparagine glycosylation. Asn1139 carries an N-linked (GlcNAc...) asparagine glycan. 3 LNR repeats span residues Cys1166–Gly1209, Cys1210–Cys1241, and Cys1247–Ser1287. A disordered region spans residues Glu1345–Glu1369. A helical membrane pass occupies residues Pro1444 to Leu1464. At Gln1465–Asn1964 the chain is on the cytoplasmic side. Residues Val1516 to Thr1535 are disordered. ANK repeat units follow at residues Thr1628–Gln1657, Ala1661–Ala1691, Asp1695–Ala1724, Arg1728–Ala1757, and Arg1761–Leu1790. The disordered stretch occupies residues Arg1879–Gln1907.

The protein belongs to the NOTCH family. In terms of assembly, heterodimer of a C-terminal fragment N(TM) and a N-terminal fragment N(EC) which are probably linked by disulfide bonds. Interacts with MAML1, MAML2 and MAML3 which act as transcriptional coactivators for NOTCH4. In terms of processing, synthesized in the endoplasmic reticulum as an inactive form which is proteolytically cleaved by a furin-like convertase in the trans-Golgi network before it reaches the plasma membrane to yield an active, ligand-accessible form. Cleavage results in a C-terminal fragment N(TM) and a N-terminal fragment N(EC). Following ligand binding, it is cleaved by TNF-alpha converting enzyme (TACE) to yield a membrane-associated intermediate fragment called notch extracellular truncation (NEXT). This fragment is then cleaved by presenilin dependent gamma-secretase to release a notch-derived peptide containing the intracellular domain (NICD) from the membrane. Post-translationally, phosphorylated. As to expression, highly expressed in lung, moderately in heart kidney, and at lower levels in the ovary and skeletal muscle. A very low expression is seen in the brain, intestine, liver and testis.

The protein localises to the cell membrane. The protein resides in the nucleus. Its function is as follows. Functions as a receptor for membrane-bound ligands Jagged1, Jagged2 and Delta1 to regulate cell-fate determination. Upon ligand activation through the released notch intracellular domain (NICD) it forms a transcriptional activator complex with RBPJ/RBPSUH and activates genes of the enhancer of split locus. Affects the implementation of differentiation, proliferation and apoptotic programs. May regulate branching morphogenesis in the developing vascular system. This is Neurogenic locus notch homolog protein 4 from Mus musculus (Mouse).